A 969-amino-acid chain; its full sequence is RNA polymerase-associated protein RapA (969 aa).

One can recognise a Helicase ATP-binding domain in the interval glutamate 164–aspartate 334. Aspartate 177–threonine 184 contacts ATP. The DEAH box signature appears at aspartate 280–histidine 283. The Helicase C-terminal domain occupies arginine 492 to isoleucine 668.

This sequence belongs to the SNF2/RAD54 helicase family. RapA subfamily. Interacts with the RNAP. Has a higher affinity for the core RNAP than for the holoenzyme. Its ATPase activity is stimulated by binding to RNAP.

Functionally, transcription regulator that activates transcription by stimulating RNA polymerase (RNAP) recycling in case of stress conditions such as supercoiled DNA or high salt concentrations. Probably acts by releasing the RNAP, when it is trapped or immobilized on tightly supercoiled DNA. Does not activate transcription on linear DNA. Probably not involved in DNA repair. In Vibrio vulnificus (strain CMCP6), this protein is RNA polymerase-associated protein RapA.